Reading from the N-terminus, the 571-residue chain is Proline-rich protein 35 (571 aa).

Disordered stretches follow at residues 1 to 27, 79 to 187, 286 to 402, and 476 to 571; these read MSRE…PHYI, GSTT…EGSV, APVS…GSPE, and GPQA…GAEV. Basic residues predominate over residues 16 to 26; sequence ARSRKPKKPHY. Gly residues predominate over residues 165-175; that stretch reads GMGGDPRGVGA. Over residues 316 to 336 the composition is skewed to basic and acidic residues; sequence TPRDPGQEGELERAAQSDPRR. The segment covering 351 to 367 has biased composition (polar residues); that stretch reads PSLTRFCSRSSLPTGSS. Residues 380–399 show a composition bias toward pro residues; the sequence is PETPGPEGPLPLQPRGPVPG.

The polypeptide is Proline-rich protein 35 (PRR35) (Homo sapiens (Human)).